The following is a 124-amino-acid chain: Multifunctional methyltransferase subunit TRM112 homolog B (124 aa).

The region spanning arginine 2 to histidine 120 is the TRM112 domain.

The protein belongs to the TRM112 family. In terms of assembly, interacts with TRM9. In terms of tissue distribution, expressed in anthers.

Its function is as follows. Acts as an activator of both rRNA/tRNA and protein methyltransferases. Required for TRM9 tRNA methyltransferase activity. This is Multifunctional methyltransferase subunit TRM112 homolog B from Arabidopsis thaliana (Mouse-ear cress).